We begin with the raw amino-acid sequence, 230 residues long: E3 ubiquitin-protein ligase RNF114 (230 aa).

The RING-type zinc-finger motif lies at 31-70 (CPVCLEVYEKPVQVPCGHVFCSACLQECLKPKKPVCGVCR). Positions 93 and 96 each coordinate Zn(2+). A C2HC RNF-type zinc finger spans residues 93-112 (CHGCRKNFFLSKIRAHVATC). Lysine 104 carries the post-translational modification N6-acetyllysine. Zn(2+) is bound by residues histidine 108 and cysteine 112. Lysine 114 carries the post-translational modification N6-acetyllysine.

Interacts with XAF1, the interaction increases XAF1 stability and proapoptotic effects, and may regulate IFN signaling. Autoubiquitinated. Polyubiquitinated in the presence of E2 enzymes UBE2D1, UBE2D2 and UBE2D3, but only monoubiquitinated in the presence of UBE2E1.

Its subcellular location is the cytoplasm. It is found in the nucleus. The catalysed reaction is S-ubiquitinyl-[E2 ubiquitin-conjugating enzyme]-L-cysteine + [acceptor protein]-L-lysine = [E2 ubiquitin-conjugating enzyme]-L-cysteine + N(6)-ubiquitinyl-[acceptor protein]-L-lysine.. Its pathway is protein modification; protein ubiquitination. In terms of biological role, E3 ubiquitin-protein ligase that promotes the ubiquitination of various substrates. In turn, participates in the regulation of many biological processes including cell cycle, apoptosis, osteoclastogenesis as well as innate or adaptive immunity. Acts as negative regulator of NF-kappa-B-dependent transcription by promoting the ubiquitination and stabilization of the NF-kappa-B inhibitor TNFAIP3. May promote the ubiquitination of TRAF6 as well. Also acts as a negative regulator of T-cell activation. Inhibits cellular dsRNA responses and interferon production by targeting MAVS component for proteasomal degradation. Ubiquitinates the CDK inhibitor CDKN1A leading to its degradationand probably also CDKN1B and CDKN1C. This activity stimulates cell cycle G1-to-S phase transition and suppresses cellular senescence. May play a role in spermatogenesis. The sequence is that of E3 ubiquitin-protein ligase RNF114 (RNF114) from Bos taurus (Bovine).